Consider the following 199-residue polypeptide: Patulin biosynthesis cluster protein F (199 aa).

The signal sequence occupies residues Met-1–Ala-21. 2 N-linked (GlcNAc...) asparagine glycosylation sites follow: Asn-129 and Asn-183.

This sequence belongs to the patF family.

The protein resides in the cytoplasm. The protein localises to the cytosol. The enzyme catalyses phyllostine = neopatulin. The protein operates within mycotoxin biosynthesis; patulin biosynthesis. In terms of biological role, part of the gene cluster that mediates the biosynthesis of patulin, an acetate-derived tetraketide mycotoxin produced by several fungal species that shows antimicrobial properties against several bacteria. PatF catalyzes the conversion of phyllostine into neopatulin. The pathway begins with the synthesis of 6-methylsalicylic acid by the polyketide synthase (PKS) patK via condensation of acetate and malonate units. The 6-methylsalicylic acid decarboxylase patG then catalyzes the decarboxylation of 6-methylsalicylic acid to yield m-cresol (also known as 3-methylphenol). These first reactions occur in the cytosol. The intermediate m-cresol is then transported into the endoplasmic reticulum where the cytochrome P450 monooxygenase patH converts it to m-hydroxybenzyl alcohol, which is further converted to gentisyl alcohol by the cytochrome P450 monooxygenase patI. The oxidoreductases patJ and patO further convert gentisyl alcohol to isoepoxydon in the vacuole. PatN catalyzes then the transformation of isoepoxydon into phyllostine. The cluster protein patF is responsible for the conversion from phyllostine to neopatulin whereas the alcohol dehydrogenase patD converts neopatulin to E-ascladiol. The steps between isoepoxydon and E-ascladiol occur in the cytosol, and E-ascladiol is probably secreted to the extracellular space by one of the cluster-specific transporters patC or patM. Finally, the secreted patulin synthase patE catalyzes the conversion of E-ascladiol to patulin. This chain is Patulin biosynthesis cluster protein F, found in Penicillium expansum (Blue mold rot fungus).